The chain runs to 394 residues: Phosphoglycerate kinase (394 aa).

Substrate-binding positions include 21–23 (DFN), Arg-36, 59–62 (HLGR), Arg-118, and Arg-151. A Phosphoserine modification is found at Ser-183. Lys-201 contacts ATP. The residue at position 299 (Thr-299) is a Phosphothreonine. ATP-binding positions include Asn-316, Glu-323, and 350–353 (GGDS).

The protein belongs to the phosphoglycerate kinase family. In terms of assembly, monomer.

The protein localises to the cytoplasm. The enzyme catalyses (2R)-3-phosphoglycerate + ATP = (2R)-3-phospho-glyceroyl phosphate + ADP. It participates in carbohydrate degradation; glycolysis; pyruvate from D-glyceraldehyde 3-phosphate: step 2/5. The chain is Phosphoglycerate kinase from Geobacillus stearothermophilus (Bacillus stearothermophilus).